We begin with the raw amino-acid sequence, 2430 residues long: Spatacsin (2430 aa).

Residues serine 1942 and serine 1943 each carry the phosphoserine modification.

As to quaternary structure, interacts with AP5Z1, AP5B1, AP5S1 and ZFYVE26. In terms of tissue distribution, ubiquitously expressed at low level. Expressed in embryonic and adult cortical projection neurons.

It localises to the cytoplasm. The protein localises to the cytosol. Its subcellular location is the nucleus. The protein resides in the cell projection. It is found in the axon. It localises to the dendrite. The protein localises to the synapse. Its function is as follows. May play a role in neurite plasticity by maintaining cytoskeleton stability and regulating synaptic vesicle transport. The polypeptide is Spatacsin (Spg11) (Mus musculus (Mouse)).